We begin with the raw amino-acid sequence, 362 residues long: Glutamate 5-kinase (362 aa).

Lys3 lines the ATP pocket. The substrate site is built by Ser43, Asp128, and Asn140. ATP contacts are provided by residues 160 to 161 (TD) and 202 to 208 (TGGMRTK). In terms of domain architecture, PUA spans 267-348 (PGTILIDAGA…REIEPILGYS (82 aa)).

It belongs to the glutamate 5-kinase family.

The protein localises to the cytoplasm. It carries out the reaction L-glutamate + ATP = L-glutamyl 5-phosphate + ADP. The protein operates within amino-acid biosynthesis; L-proline biosynthesis; L-glutamate 5-semialdehyde from L-glutamate: step 1/2. In terms of biological role, catalyzes the transfer of a phosphate group to glutamate to form L-glutamate 5-phosphate. The polypeptide is Glutamate 5-kinase (Xanthomonas campestris pv. campestris (strain 8004)).